The chain runs to 103 residues: Co-chaperonin GroES (103 aa).

It belongs to the GroES chaperonin family. As to quaternary structure, heptamer of 7 subunits arranged in a ring. Interacts with the chaperonin GroEL.

It localises to the cytoplasm. Its function is as follows. Together with the chaperonin GroEL, plays an essential role in assisting protein folding. The GroEL-GroES system forms a nano-cage that allows encapsulation of the non-native substrate proteins and provides a physical environment optimized to promote and accelerate protein folding. GroES binds to the apical surface of the GroEL ring, thereby capping the opening of the GroEL channel. This chain is Co-chaperonin GroES, found in Synechococcus elongatus (strain ATCC 33912 / PCC 7942 / FACHB-805) (Anacystis nidulans R2).